The chain runs to 523 residues: Maintenance of mitochondrial morphology protein 1 (523 aa).

The Lumenal segment spans residues 1 to 43 (MAGSTSASLQTPYFPSSTQINPVRVDHTLPLPPAQPSLSFTQG). A helical transmembrane segment spans residues 44-64 (LLVGQLSVVLLIGAFIKFFIF). Residues 65–523 (GEAPPPPSRG…GSMPDTVTET (459 aa)) are Cytoplasmic-facing. Disordered stretches follow at residues 70–118 (PPSR…SSST), 295–349 (TSDQ…SKHG), 420–473 (RTGL…IDRG), and 492–523 (GGHQ…VTET). Polar residues-rich tracts occupy residues 74–96 (GLSN…TDSS), 105–118 (STSN…SSST), and 295–312 (TSDQ…TTSE). The SMP-LTD domain occupies 151–412 (QPESLDWFNV…EPRVQVVGLP (262 aa)). The span at 449–467 (GVSGGGGSGGGSGGGGGSM) shows a compositional bias: gly residues.

Belongs to the MMM1 family. As to quaternary structure, homodimer. Component of the ER-mitochondria encounter structure (ERMES) or MDM complex, composed of MMM1, MDM10, MDM12 and MDM34. An MMM1 homodimer associates with one molecule of MDM12 on each side in a pairwise head-to-tail manner, and the SMP-LTD domains of MMM1 and MDM12 generate a continuous hydrophobic tunnel for phospholipid trafficking.

It localises to the endoplasmic reticulum membrane. Its function is as follows. Component of the ERMES/MDM complex, which serves as a molecular tether to connect the endoplasmic reticulum (ER) and mitochondria. Components of this complex are involved in the control of mitochondrial shape and protein biogenesis, and function in nonvesicular lipid trafficking between the ER and mitochondria. The MDM12-MMM1 subcomplex functions in the major beta-barrel assembly pathway that is responsible for biogenesis of all outer membrane beta-barrel proteins, and acts in a late step after the SAM complex. The MDM10-MDM12-MMM1 subcomplex further acts in the TOM40-specific pathway after the action of the MDM12-MMM1 complex. Essential for establishing and maintaining the structure of mitochondria and maintenance of mtDNA nucleoids. The polypeptide is Maintenance of mitochondrial morphology protein 1 (Paracoccidioides brasiliensis (strain Pb03)).